Consider the following 156-residue polypeptide: Rhombotin-1 (156 aa).

2 consecutive LIM zinc-binding domains span residues 22–84 (KGCA…LFGT) and 86–148 (GNCA…GQLN).

Expressed in the brain and not in the thymus.

It is found in the nucleus. May be involved in gene regulation within neural lineage cells potentially by direct DNA binding or by binding to other transcription factors. The polypeptide is Rhombotin-1 (LMO1) (Bos taurus (Bovine)).